A 142-amino-acid polypeptide reads, in one-letter code: Large ribosomal subunit protein uL13 (142 aa).

This sequence belongs to the universal ribosomal protein uL13 family. As to quaternary structure, part of the 50S ribosomal subunit.

In terms of biological role, this protein is one of the early assembly proteins of the 50S ribosomal subunit, although it is not seen to bind rRNA by itself. It is important during the early stages of 50S assembly. The chain is Large ribosomal subunit protein uL13 from Shewanella putrefaciens (strain CN-32 / ATCC BAA-453).